Consider the following 242-residue polypeptide: ATP-dependent dethiobiotin synthetase BioD (242 aa).

12–17 is a binding site for ATP; the sequence is EVGKTV. T16 is a binding site for Mg(2+). The active site involves K37. Position 41 (S41) interacts with substrate. Residues D51 and 112–115 contribute to the ATP site; that span reads EGAG. Positions 51 and 112 each coordinate Mg(2+).

Belongs to the dethiobiotin synthetase family. As to quaternary structure, homodimer. The cofactor is Mg(2+).

The protein resides in the cytoplasm. It carries out the reaction (7R,8S)-7,8-diammoniononanoate + CO2 + ATP = (4R,5S)-dethiobiotin + ADP + phosphate + 3 H(+). Its pathway is cofactor biosynthesis; biotin biosynthesis; biotin from 7,8-diaminononanoate: step 1/2. Functionally, catalyzes a mechanistically unusual reaction, the ATP-dependent insertion of CO2 between the N7 and N8 nitrogen atoms of 7,8-diaminopelargonic acid (DAPA, also called 7,8-diammoniononanoate) to form a ureido ring. In Bacillus thuringiensis (strain Al Hakam), this protein is ATP-dependent dethiobiotin synthetase BioD.